The following is a 159-amino-acid chain: Phosphopantetheine adenylyltransferase (159 aa).

Residue T10 coordinates substrate. Residues 10 to 11 (TF) and H18 contribute to the ATP site. Residues K42, L74, and R88 each coordinate substrate. ATP contacts are provided by residues 89–91 (GMR), E99, and 124–130 (WSYVSST).

Belongs to the bacterial CoaD family. As to quaternary structure, homohexamer. Mg(2+) serves as cofactor.

The protein resides in the cytoplasm. The catalysed reaction is (R)-4'-phosphopantetheine + ATP + H(+) = 3'-dephospho-CoA + diphosphate. It participates in cofactor biosynthesis; coenzyme A biosynthesis; CoA from (R)-pantothenate: step 4/5. Functionally, reversibly transfers an adenylyl group from ATP to 4'-phosphopantetheine, yielding dephospho-CoA (dPCoA) and pyrophosphate. The sequence is that of Phosphopantetheine adenylyltransferase from Mannheimia succiniciproducens (strain KCTC 0769BP / MBEL55E).